Reading from the N-terminus, the 226-residue chain is Fibrillarin-like rRNA/tRNA 2'-O-methyltransferase (226 aa).

Residues 85-86 (TT), 104-105 (EF), 129-130 (DA), and 149-152 (DVAQ) each bind S-adenosyl-L-methionine.

It belongs to the methyltransferase superfamily. Fibrillarin family. As to quaternary structure, interacts with nop5. Component of box C/D small ribonucleoprotein (sRNP) particles that contain rpl7ae, FlpA and nop5, plus a guide RNA.

Its function is as follows. Involved in pre-rRNA and tRNA processing. Utilizes the methyl donor S-adenosyl-L-methionine to catalyze the site-specific 2'-hydroxyl methylation of ribose moieties in rRNA and tRNA. Site specificity is provided by a guide RNA that base pairs with the substrate. Methylation occurs at a characteristic distance from the sequence involved in base pairing with the guide RNA. The polypeptide is Fibrillarin-like rRNA/tRNA 2'-O-methyltransferase (Thermococcus gammatolerans (strain DSM 15229 / JCM 11827 / EJ3)).